A 254-amino-acid chain; its full sequence is Vesicle transport protein USE1 (254 aa).

Over M1 to K228 the chain is Cytoplasmic. The helical; Anchor for type IV membrane protein transmembrane segment at V229–F249 threads the bilayer. Residues K250–T254 lie on the Lumenal side of the membrane.

The protein belongs to the USE1 family.

The protein localises to the endoplasmic reticulum membrane. SNARE that may be involved in targeting and fusion of Golgi-derived retrograde transport vesicles with the ER. The protein is Vesicle transport protein USE1 of Caenorhabditis elegans.